The primary structure comprises 274 residues: Large ribosomal subunit protein uL2 (274 aa).

Residues 221 to 274 are disordered; that stretch reads RGTAMNPVDHPHGGGEGKNFGKHPVTPWGVQTKGKKTRSNKRTDKFIVRRRSKK.

This sequence belongs to the universal ribosomal protein uL2 family. As to quaternary structure, part of the 50S ribosomal subunit. Forms a bridge to the 30S subunit in the 70S ribosome.

Functionally, one of the primary rRNA binding proteins. Required for association of the 30S and 50S subunits to form the 70S ribosome, for tRNA binding and peptide bond formation. It has been suggested to have peptidyltransferase activity; this is somewhat controversial. Makes several contacts with the 16S rRNA in the 70S ribosome. The protein is Large ribosomal subunit protein uL2 of Serratia proteamaculans (strain 568).